Here is a 58-residue protein sequence, read N- to C-terminus: SPbeta prophage-derived uncharacterized protein YonT (58 aa).

Residues 6-26 form a helical membrane-spanning segment; that stretch reads GIVVAFLISLTVLTINSLTIV. Residues 35 to 58 are disordered; it reads GTSKKKKRIRKRLRPKRQRQRIRR. Basic residues predominate over residues 36–58; it reads TSKKKKRIRKRLRPKRQRQRIRR.

The protein resides in the cell membrane. The protein is SPbeta prophage-derived uncharacterized protein YonT (yonT) of Bacillus subtilis (strain 168).